The primary structure comprises 31 residues: Potassium channel toxin alpha-KTx 5.1 (31 aa).

Disulfide bonds link C3-C21, C8-C26, and C12-C28. The tract at residues 6–9 is [R/K]XCQ motif; sequence RMCQ. A Histidine amide modification is found at H31.

Belongs to the short scorpion toxin superfamily. Potassium channel inhibitor family. Alpha-KTx 05 subfamily. In terms of processing, two disulfide bonds are the minimal requirement needed to produce a nativelike and bio-active conformation in this toxin. The third disulfide provides an additional contribution to structure stabilization and can modulate biological potency depending on its position and the structural regions involved in biological activity. In terms of tissue distribution, expressed by the venom gland.

Its subcellular location is the secreted. Its function is as follows. Blocker for the small conductance calcium-activated potassium channels. Shows the best affinity for KCa2.2/KCNN2 (Kd=0.2 nM), followed by KCa2.3/KCNN3 (Kd=1.1 nM) and KCa2.1/KCNN1 (Kd=325 nM). This chain is Potassium channel toxin alpha-KTx 5.1, found in Leiurus hebraeus (Hebrew deathstalker scorpion).